We begin with the raw amino-acid sequence, 408 residues long: Branched-chain amino acid aminotransferase 2, chloroplastic (408 aa).

Residues 1-58 constitute a chloroplast transit peptide; it reads MDCAAALLPGFHPNYLLCPSRHFSSLLPKTDLSSPLKFQLQNKQLSLASSHGFSPVIC. A pyridoxal 5'-phosphate-binding site is contributed by Arg-152. Lys-254 serves as the catalytic Proton acceptor. Residue Lys-254 is modified to N6-(pyridoxal phosphate)lysine. Glu-290 contributes to the pyridoxal 5'-phosphate binding site.

The protein belongs to the class-IV pyridoxal-phosphate-dependent aminotransferase family. The cofactor is pyridoxal 5'-phosphate. Expressed in lupulin glands and leaves.

The protein localises to the plastid. It is found in the chloroplast. The enzyme catalyses L-isoleucine + 2-oxoglutarate = (S)-3-methyl-2-oxopentanoate + L-glutamate. It catalyses the reaction L-leucine + 2-oxoglutarate = 4-methyl-2-oxopentanoate + L-glutamate. The catalysed reaction is L-valine + 2-oxoglutarate = 3-methyl-2-oxobutanoate + L-glutamate. Its pathway is amino-acid biosynthesis; L-isoleucine biosynthesis; L-isoleucine from 2-oxobutanoate: step 4/4. It participates in amino-acid biosynthesis; L-leucine biosynthesis; L-leucine from 3-methyl-2-oxobutanoate: step 4/4. It functions in the pathway amino-acid biosynthesis; L-valine biosynthesis; L-valine from pyruvate: step 4/4. Its function is as follows. Converts 2-oxo acids to branched-chain amino acids. Shows no kinetic preferences corresponding to anabolic or catabolic functions, but likely involved in BCAA biosynthesis. The sequence is that of Branched-chain amino acid aminotransferase 2, chloroplastic from Humulus lupulus (European hop).